A 187-amino-acid chain; its full sequence is ATP synthase subunit delta (187 aa).

It belongs to the ATPase delta chain family. In terms of assembly, F-type ATPases have 2 components, F(1) - the catalytic core - and F(0) - the membrane proton channel. F(1) has five subunits: alpha(3), beta(3), gamma(1), delta(1), epsilon(1). F(0) has three main subunits: a(1), b(2) and c(10-14). The alpha and beta chains form an alternating ring which encloses part of the gamma chain. F(1) is attached to F(0) by a central stalk formed by the gamma and epsilon chains, while a peripheral stalk is formed by the delta and b chains.

The protein resides in the cell membrane. Its function is as follows. F(1)F(0) ATP synthase produces ATP from ADP in the presence of a proton or sodium gradient. F-type ATPases consist of two structural domains, F(1) containing the extramembraneous catalytic core and F(0) containing the membrane proton channel, linked together by a central stalk and a peripheral stalk. During catalysis, ATP synthesis in the catalytic domain of F(1) is coupled via a rotary mechanism of the central stalk subunits to proton translocation. In terms of biological role, this protein is part of the stalk that links CF(0) to CF(1). It either transmits conformational changes from CF(0) to CF(1) or is implicated in proton conduction. The chain is ATP synthase subunit delta from Mesomycoplasma hyopneumoniae (strain 232) (Mycoplasma hyopneumoniae).